We begin with the raw amino-acid sequence, 740 residues long: Phosphoribosylformylglycinamidine synthase subunit PurL (740 aa).

The active site involves histidine 50. ATP is bound by residues tyrosine 53 and lysine 92. Glutamate 94 contacts Mg(2+). Substrate is bound by residues 95–98 and arginine 117; that span reads SHNH. Histidine 96 serves as the catalytic Proton acceptor. Aspartate 118 provides a ligand contact to Mg(2+). Glutamine 241 contacts substrate. Mg(2+) is bound at residue aspartate 269. 313–315 contributes to the substrate binding site; it reads ESQ. The ATP site is built by aspartate 495 and glycine 532. Residue asparagine 533 participates in Mg(2+) binding. Serine 535 provides a ligand contact to substrate.

It belongs to the FGAMS family. As to quaternary structure, monomer. Part of the FGAM synthase complex composed of 1 PurL, 1 PurQ and 2 PurS subunits.

Its subcellular location is the cytoplasm. The catalysed reaction is N(2)-formyl-N(1)-(5-phospho-beta-D-ribosyl)glycinamide + L-glutamine + ATP + H2O = 2-formamido-N(1)-(5-O-phospho-beta-D-ribosyl)acetamidine + L-glutamate + ADP + phosphate + H(+). The protein operates within purine metabolism; IMP biosynthesis via de novo pathway; 5-amino-1-(5-phospho-D-ribosyl)imidazole from N(2)-formyl-N(1)-(5-phospho-D-ribosyl)glycinamide: step 1/2. Functionally, part of the phosphoribosylformylglycinamidine synthase complex involved in the purines biosynthetic pathway. Catalyzes the ATP-dependent conversion of formylglycinamide ribonucleotide (FGAR) and glutamine to yield formylglycinamidine ribonucleotide (FGAM) and glutamate. The FGAM synthase complex is composed of three subunits. PurQ produces an ammonia molecule by converting glutamine to glutamate. PurL transfers the ammonia molecule to FGAR to form FGAM in an ATP-dependent manner. PurS interacts with PurQ and PurL and is thought to assist in the transfer of the ammonia molecule from PurQ to PurL. The protein is Phosphoribosylformylglycinamidine synthase subunit PurL of Brucella abortus (strain S19).